A 264-amino-acid chain; its full sequence is Thiazole synthase (264 aa).

Residue Lys106 is the Schiff-base intermediate with DXP of the active site. Residues Gly167, 193-194 (AG), and 215-216 (NS) each bind 1-deoxy-D-xylulose 5-phosphate.

This sequence belongs to the ThiG family. In terms of assembly, homotetramer. Forms heterodimers with either ThiH or ThiS.

The protein localises to the cytoplasm. It carries out the reaction [ThiS sulfur-carrier protein]-C-terminal-Gly-aminoethanethioate + 2-iminoacetate + 1-deoxy-D-xylulose 5-phosphate = [ThiS sulfur-carrier protein]-C-terminal Gly-Gly + 2-[(2R,5Z)-2-carboxy-4-methylthiazol-5(2H)-ylidene]ethyl phosphate + 2 H2O + H(+). It functions in the pathway cofactor biosynthesis; thiamine diphosphate biosynthesis. Functionally, catalyzes the rearrangement of 1-deoxy-D-xylulose 5-phosphate (DXP) to produce the thiazole phosphate moiety of thiamine. Sulfur is provided by the thiocarboxylate moiety of the carrier protein ThiS. In vitro, sulfur can be provided by H(2)S. The protein is Thiazole synthase of Ectopseudomonas mendocina (strain ymp) (Pseudomonas mendocina).